An 835-amino-acid polypeptide reads, in one-letter code: Translation initiation factor IF-2 (835 aa).

Positions 1 to 243 are disordered; the sequence is MSDTDGKKTL…RARQKAMGGA (243 aa). The span at 43 to 67 shows a compositional bias: low complexity; the sequence is VPKPGAGKPSAGGSSPAGDPSRRPA. 3 stretches are compositionally biased toward basic and acidic residues: residues 85 to 147, 157 to 166, and 175 to 205; these read KARE…EAKR, EAPKAERSAE, and EGGDNARRTTDRDREREQRQTRGKGRQDGRR. The tr-type G domain maps to 332–500; that stretch reads PRPPVITIMG…AIALQAEILE (169 aa). Residues 341-348 form a G1 region; that stretch reads GHVDHGKT. 341–348 provides a ligand contact to GTP; sequence GHVDHGKT. A G2 region spans residues 366–370; it reads GITQH. Residues 388–391 form a G3 region; it reads DTPG. GTP contacts are provided by residues 388 to 392 and 442 to 445; these read DTPGH and NKID. The interval 442 to 445 is G4; that stretch reads NKID. The segment at 478–480 is G5; sequence SAK.

It belongs to the TRAFAC class translation factor GTPase superfamily. Classic translation factor GTPase family. IF-2 subfamily.

It is found in the cytoplasm. In terms of biological role, one of the essential components for the initiation of protein synthesis. Protects formylmethionyl-tRNA from spontaneous hydrolysis and promotes its binding to the 30S ribosomal subunits. Also involved in the hydrolysis of GTP during the formation of the 70S ribosomal complex. The protein is Translation initiation factor IF-2 of Ruegeria pomeroyi (strain ATCC 700808 / DSM 15171 / DSS-3) (Silicibacter pomeroyi).